The primary structure comprises 316 residues: Ribosomal RNA large subunit methyltransferase F (316 aa).

It belongs to the methyltransferase superfamily. METTL16/RlmF family.

The protein resides in the cytoplasm. The catalysed reaction is adenosine(1618) in 23S rRNA + S-adenosyl-L-methionine = N(6)-methyladenosine(1618) in 23S rRNA + S-adenosyl-L-homocysteine + H(+). In terms of biological role, specifically methylates the adenine in position 1618 of 23S rRNA. The protein is Ribosomal RNA large subunit methyltransferase F of Pseudomonas putida (strain W619).